Reading from the N-terminus, the 522-residue chain is Glycogen synthase (522 aa).

The interval 1–29 (MISAVLDTQGDHPQQQAGDRAAPSVPVPG) is disordered. Lys-58 is a binding site for ADP-alpha-D-glucose.

Belongs to the glycosyltransferase 1 family. Bacterial/plant glycogen synthase subfamily.

It carries out the reaction [(1-&gt;4)-alpha-D-glucosyl](n) + ADP-alpha-D-glucose = [(1-&gt;4)-alpha-D-glucosyl](n+1) + ADP + H(+). It participates in glycan biosynthesis; glycogen biosynthesis. Synthesizes alpha-1,4-glucan chains using ADP-glucose. The sequence is that of Glycogen synthase from Pseudomonas fluorescens (strain ATCC BAA-477 / NRRL B-23932 / Pf-5).